We begin with the raw amino-acid sequence, 345 residues long: Platelet-derived growth factor C (345 aa).

Residues M1–A22 form the signal peptide. One can recognise a CUB domain in the interval H46 to L163. N-linked (GlcNAc...) asparagine glycosylation occurs at N55. Cystine bridges form between C104–C124, C250–C294, C280–C335, and C287–C337.

It belongs to the PDGF/VEGF growth factor family. As to quaternary structure, homodimer; disulfide-linked. Interacts with PDGFRA homodimers, and with heterodimers formed by PDGFRA and PDGFRB. Post-translationally, proteolytic removal of the N-terminal CUB domain releasing the core domain is necessary for unmasking the receptor-binding epitopes of the core domain. Cleavage after basic residues in the hinge region (region connecting the CUB and growth factor domains) gives rise to the receptor-binding form.

It localises to the secreted. Functionally, growth factor that plays an essential role in the regulation of embryonic development, cell proliferation, cell migration, survival and chemotaxis. Potent mitogen and chemoattractant for cells of mesenchymal origin. Required for normal skeleton formation during embryonic development. Required for normal skin morphogenesis during embryonic development. Plays an important role in wound healing, in angiogenesis and blood vessel development. This Gallus gallus (Chicken) protein is Platelet-derived growth factor C (PDGFC).